Here is a 395-residue protein sequence, read N- to C-terminus: Scyllo-inosose 3-dehydrogenase (395 aa).

Cys66 provides a ligand contact to Zn(2+). Active-site charge relay system residues include Ser68 and His71. Residues His95, Glu96, Cys131, Cys134, Cys137, Cys145, and Glu193 each contribute to the Zn(2+) site. The NAD(+) site is built by Ile223, Glu243, and Arg248.

The protein belongs to the zinc-containing alcohol dehydrogenase family. In terms of assembly, homodimer. Zn(2+) serves as cofactor.

The catalysed reaction is scyllo-inosose + NAD(+) = 3-dehydro-scyllo-inosose + NADH + H(+). The protein operates within polyol metabolism; myo-inositol metabolism. In terms of biological role, catalyzes the NAD(+)-dependent oxidation of scyllo-inosose (2-keto-myo-inositol) to 3-dehydro-scyllo-inosose (diketo-inositol), and thus probably functions in a myo-inositol degradation pathway together with IolG, IolN and IolO. Has no activity on myo-inositol, D-chiro-inositol and 1-keto-D-chiro-inositol. In Thermotoga maritima (strain ATCC 43589 / DSM 3109 / JCM 10099 / NBRC 100826 / MSB8), this protein is Scyllo-inosose 3-dehydrogenase.